A 171-amino-acid chain; its full sequence is 3-hydroxydecanoyl-[acyl-carrier-protein] dehydratase (171 aa).

Residue histidine 70 is part of the active site.

This sequence belongs to the thioester dehydratase family. FabA subfamily. In terms of assembly, homodimer.

Its subcellular location is the cytoplasm. The catalysed reaction is a (3R)-hydroxyacyl-[ACP] = a (2E)-enoyl-[ACP] + H2O. The enzyme catalyses (3R)-hydroxydecanoyl-[ACP] = (2E)-decenoyl-[ACP] + H2O. It carries out the reaction (2E)-decenoyl-[ACP] = (3Z)-decenoyl-[ACP]. Its pathway is lipid metabolism; fatty acid biosynthesis. Its function is as follows. Necessary for the introduction of cis unsaturation into fatty acids. Catalyzes the dehydration of (3R)-3-hydroxydecanoyl-ACP to E-(2)-decenoyl-ACP and then its isomerization to Z-(3)-decenoyl-ACP. Can catalyze the dehydratase reaction for beta-hydroxyacyl-ACPs with saturated chain lengths up to 16:0, being most active on intermediate chain length. The sequence is that of 3-hydroxydecanoyl-[acyl-carrier-protein] dehydratase from Pseudoalteromonas translucida (strain TAC 125).